The chain runs to 401 residues: Subtilisin-like protease 10 (401 aa).

The N-terminal stretch at 1-19 (MLFLKAVIAILSVLPAADA) is a signal peptide. Residues 20–116 (AAILNFENKQ…IEPDRMASAQ (97 aa)) constitute a propeptide that is removed on maturation. Positions 35-112 (SYIVVLKNDI…QVDYIEPDRM (78 aa)) constitute an Inhibitor I9 domain. A Peptidase S8 domain is found at 126–401 (SWGLGRISHQ…NRLLYNGSGQ (276 aa)). Active-site charge relay system residues include aspartate 158 and histidine 189. Asparagine 250 is a glycosylation site (N-linked (GlcNAc...) asparagine). Serine 347 (charge relay system) is an active-site residue. Residue asparagine 397 is glycosylated (N-linked (GlcNAc...) asparagine).

Belongs to the peptidase S8 family.

The protein resides in the secreted. Functionally, secreted subtilisin-like serine protease with keratinolytic activity that contributes to pathogenicity. The polypeptide is Subtilisin-like protease 10 (SUB10) (Arthroderma otae (strain ATCC MYA-4605 / CBS 113480) (Microsporum canis)).